Consider the following 159-residue polypeptide: RNA pyrophosphohydrolase (159 aa).

Positions Gly-6–Lys-149 constitute a Nudix hydrolase domain. The Nudix box signature appears at Gly-38 to Gly-59.

This sequence belongs to the Nudix hydrolase family. RppH subfamily. Requires a divalent metal cation as cofactor.

In terms of biological role, accelerates the degradation of transcripts by removing pyrophosphate from the 5'-end of triphosphorylated RNA, leading to a more labile monophosphorylated state that can stimulate subsequent ribonuclease cleavage. This chain is RNA pyrophosphohydrolase, found in Pseudomonas aeruginosa (strain LESB58).